Reading from the N-terminus, the 358-residue chain is Isopentenyl-diphosphate delta-isomerase (358 aa).

12-13 (RK) contacts substrate. FMN-binding positions include 69-71 (AMT), Ser99, and Asn128. Residue Gln158 participates in substrate binding. Glu159 contacts Mg(2+). FMN-binding positions include Lys190, Thr220, 267–269 (GIR), and 288–289 (AG).

Belongs to the IPP isomerase type 2 family. In terms of assembly, homooctamer. Dimer of tetramers. Requires FMN as cofactor. NADPH serves as cofactor. Mg(2+) is required as a cofactor.

Its subcellular location is the cytoplasm. The catalysed reaction is isopentenyl diphosphate = dimethylallyl diphosphate. In terms of biological role, involved in the biosynthesis of isoprenoids. Catalyzes the 1,3-allylic rearrangement of the homoallylic substrate isopentenyl (IPP) to its allylic isomer, dimethylallyl diphosphate (DMAPP). This chain is Isopentenyl-diphosphate delta-isomerase, found in Listeria monocytogenes serotype 4b (strain CLIP80459).